A 229-amino-acid polypeptide reads, in one-letter code: Cytidylate kinase (229 aa).

An ATP-binding site is contributed by 12-20; it reads GPSGSGKGT.

It belongs to the cytidylate kinase family. Type 1 subfamily.

It localises to the cytoplasm. It catalyses the reaction CMP + ATP = CDP + ADP. The enzyme catalyses dCMP + ATP = dCDP + ADP. This Pseudomonas syringae pv. syringae (strain B728a) protein is Cytidylate kinase.